Consider the following 426-residue polypeptide: MNIAVIGLSHKTAPVDVREKLSVPEDVRERALQHLCGYAHIQEATILSTCNRLEIYIVTSDTEVGVREVHQFLSEWSHIPLPQLRPYLFILLHQDAVMHLMRVASGLDSLVIGEGQILSQVKRCHQLGQQYKSIGPILNRVFTGAIAAGKRVRTETSIGTGAVSISSAAVELADLRLQNLQNCRIAVVGAGKMSRLVVQHLIARGVKEIRIINRSLERAQELAQQFPEVRFELFTMTDLLPIVAAMDLVFTSTAATEPLLDRDNLGAVLVGDRSLAIIDISVPRNVHANVTELGTVQLFNVDDLQAVVAQNQEARRQLAQEAEGILEEELETFLAWWHALETVPIIRSLRQKMEAIRTQELEKALSRLGSEFADKHQGVIEAMTRTIINKILHDPTVQLQSQRDLESRQRAMQTLQDLFNLEPIEA.

Substrate is bound by residues 49–52 (TCNR), serine 109, 114–116 (EGQ), and glutamine 120. Catalysis depends on cysteine 50, which acts as the Nucleophile. 189-194 (GAGKMS) contributes to the NADP(+) binding site.

This sequence belongs to the glutamyl-tRNA reductase family. As to quaternary structure, homodimer.

It catalyses the reaction (S)-4-amino-5-oxopentanoate + tRNA(Glu) + NADP(+) = L-glutamyl-tRNA(Glu) + NADPH + H(+). It participates in porphyrin-containing compound metabolism; protoporphyrin-IX biosynthesis; 5-aminolevulinate from L-glutamyl-tRNA(Glu): step 1/2. It functions in the pathway porphyrin-containing compound metabolism; chlorophyll biosynthesis. Functionally, catalyzes the NADPH-dependent reduction of glutamyl-tRNA(Glu) to glutamate 1-semialdehyde (GSA). The chain is Glutamyl-tRNA reductase from Thermosynechococcus vestitus (strain NIES-2133 / IAM M-273 / BP-1).